A 104-amino-acid chain; its full sequence is Protein P3 (104 aa).

Residues 77 to 99 (LVFGVPQKTLLLGFGGLLVLGLV) form a helical membrane-spanning segment.

In terms of assembly, homodimer.

The protein resides in the virion membrane. This chain is Protein P3 (III), found in Pseudoalteromonas phage PM2 (Bacteriophage PM2).